Consider the following 868-residue polypeptide: Spindle and centriole-associated protein 1 (868 aa).

Disordered stretches follow at residues 129–154 (RTGF…DPGT), 172–201 (DDGG…HSNR), 229–250 (IAAQ…AEDQ), and 291–326 (KPLL…LASS). Composition is skewed to polar residues over residues 190 to 200 (ELPNSLSPHSN) and 229 to 245 (IAAQ…SSEL). A Phosphothreonine modification is found at threonine 236. The residue at position 240 (serine 240) is a Phosphoserine. Positions 315-326 (SSSTTSADLASS) are enriched in low complexity. The stretch at 381 to 434 (RYLKESETQLRKEVETRQQLEQMLGDHRELIDALTAEILLLREENGAVQARLQQ) forms a coiled coil. Disordered stretches follow at residues 630-664 (PQFV…LGDG) and 702-722 (SSGG…NASE). The segment covering 634–649 (SLSQPPCSSPPSTQQS) has biased composition (low complexity). Serine 655 carries the phosphoserine modification. The segment covering 706–715 (EHGDGLREPS) has biased composition (basic and acidic residues). A coiled-coil region spans residues 736–764 (SSMEERIAELNRQSMEARSKLLQLIEQQK). A phosphoserine mark is found at serine 772, serine 773, serine 776, and serine 831. Residues 805–868 (SSKCNTVSPV…GWFALSAHLP (64 aa)) are disordered. The segment covering 812–831 (SPVSGVSSRRSSGAISNSCS) has biased composition (low complexity).

As to quaternary structure, interacts with CEP120.

Its subcellular location is the cytoplasm. The protein resides in the cytoskeleton. It localises to the microtubule organizing center. It is found in the centrosome. The protein localises to the centriole. Its subcellular location is the spindle. Its function is as follows. Regulator required for centriole duplication, for proper bipolar spindle formation and chromosome congression in mitosis. In Rattus norvegicus (Rat), this protein is Spindle and centriole-associated protein 1 (Spice1).